The chain runs to 197 residues: Small ribosomal subunit protein uS4B (197 aa).

The S4 RNA-binding domain occupies 88-151 (CRLDNIAYRI…RKNDEFADNF (64 aa)).

The protein belongs to the universal ribosomal protein uS4 family. Part of the 30S ribosomal subunit. Contacts protein S5. The interaction surface between S4 and S5 is involved in control of translational fidelity.

In terms of biological role, one of the primary rRNA binding proteins, it binds directly to 16S rRNA where it nucleates assembly of the body of the 30S subunit. Functionally, with S5 and S12 plays an important role in translational accuracy. This Clostridium botulinum (strain Langeland / NCTC 10281 / Type F) protein is Small ribosomal subunit protein uS4B.